The following is a 273-amino-acid chain: Secretory carrier-associated membrane protein 6 (273 aa).

The interval M1–E69 is disordered. At M1–A131 the chain is on the cytoplasmic side. The segment covering N20–S30 has biased composition (gly residues). Residues R68–A94 adopt a coiled-coil conformation. A run of 4 helical transmembrane segments spans residues S132–I152, L159–Y179, F194–A214, and I239–I259. Over G260–K273 the chain is Cytoplasmic.

It belongs to the SCAMP family.

The protein resides in the cell membrane. The protein localises to the cytoplasmic vesicle. It is found in the secretory vesicle membrane. Functionally, probably involved in membrane trafficking. The protein is Secretory carrier-associated membrane protein 6 (SCAMP6) of Oryza sativa subsp. japonica (Rice).